The following is a 354-amino-acid chain: MNTLFMHCRPGFEGEVCAEISEHAARLGVAGYAKGKPQSASAEFVCSEEGGAERLMGELRFNQLIFPRQWARGGYVELPERDRISVLLAQLADFPVFGSLWLEVLDSNEGKELSTFCRKFEVPLRKALEKAGRLVDDPGRPRLLLTFISGRRVFVGVASASNSALWPMGIPRLKFPREAPSRSTLKLEEAWHQFIPREQWEQRLGDDMTGVDLGASPGGWTYQLVRRGMLVTAIDNGPMAESLMDTGLVQHLMADGFTWQPKQPVDWMVCDIVEKPARTTSLIETWLGEGLCREAVVNLKLPMKQRYAEVRRLLDRMEATFKARKIRVSIACKQLYHDREEVTCHLRRLDLKPR.

S-adenosyl-L-methionine-binding positions include serine 183, 216–219 (SPGG), aspartate 235, aspartate 255, and aspartate 271. The active-site Proton acceptor is lysine 300.

The protein belongs to the class I-like SAM-binding methyltransferase superfamily. RNA methyltransferase RlmE family. RlmM subfamily. As to quaternary structure, monomer.

It localises to the cytoplasm. It catalyses the reaction cytidine(2498) in 23S rRNA + S-adenosyl-L-methionine = 2'-O-methylcytidine(2498) in 23S rRNA + S-adenosyl-L-homocysteine + H(+). Its function is as follows. Catalyzes the 2'-O-methylation at nucleotide C2498 in 23S rRNA. This Pseudomonas putida (strain ATCC 47054 / DSM 6125 / CFBP 8728 / NCIMB 11950 / KT2440) protein is Ribosomal RNA large subunit methyltransferase M.